Here is a 240-residue protein sequence, read N- to C-terminus: Small ribosomal subunit protein eS4 (240 aa).

Residues Val37 to Asp99 form the S4 RNA-binding domain.

This sequence belongs to the eukaryotic ribosomal protein eS4 family.

The sequence is that of Small ribosomal subunit protein eS4 from Halorubrum lacusprofundi (strain ATCC 49239 / DSM 5036 / JCM 8891 / ACAM 34).